We begin with the raw amino-acid sequence, 443 residues long: MSELTDLLLQGPRSAPELRQRLAISQATFSRLVAREDRVIRFGKARATRYALLRPYRGIERIPVWRVDDTGKAHKFADIRLCWPQGSCLVTGADGDEQWFDGLPWYLTDLRPQGFLGRAWGRKLAAQLNLTDDIRLWQEEDVLYALTVFNGEYTGGWLVGEGNYQRWITAQHPAEIPLDQKLTHYEQLASDALAGEIVGSSAGGEQPKFTYYAQTPSGNKHVLVKFTVPQQTAVSQRWGDLLIAESIAAQILRDGGIHAIESTVLVTSNRQVFLEAERFDCKGNDGRLPIVSLEAVQSEFISSPGSWPQAMRRLCEQQLVTHQSVAQTEVIWAFGRLIANSDMHAGNLSFYLSEPPFALTPVYDMLPMVYAPNSAGMLRDAAIEVKFDLNVSKSAWLTAIPLAQQFWQTVARDPRISEAFRHIAQEMPEKIRQIEEKVARMGG.

The active-site Proton acceptor is Asp-342.

Belongs to the HipA Ser/Thr kinase family.

Its function is as follows. Toxic when overexpressed in E.coli, leading to long filamentous cells. The toxic effect is neutralized by non-cognate antitoxin HipB. Does not seem to inhibit DNA, RNA or protein synthesis, and unlike paralogous toxin HipA its toxic activity is not counteracted by overexpression of GltX. Binds DNA. Might be a protein kinase. This Escherichia coli (strain K12) protein is Toxin YjjJ (yjjJ).